We begin with the raw amino-acid sequence, 944 residues long: Envelope glycoprotein B (944 aa).

Disordered regions lie at residues 1–37 (MGPP…RPGS) and 68–108 (TDGG…RVTG). The N-terminal stretch at 1-55 (MGPPPPLRRQRLLLPRPSRRRPPARLASGRRSSRPGSSWTWYATLIASLVWYPTV) is a signal peptide. The segment covering 24-37 (ARLASGRRSSRPGS) has biased composition (low complexity). At 56–785 (SSTTLEATVV…GGFVSFFTNP (730 aa)) the chain is on the virion surface side. Positions 71 to 85 (GATGQASGGGGGGAG) are enriched in gly residues. Positions 89–99 (PSESPETSADT) are enriched in polar residues. Asn114 is a glycosylation site (N-linked (GlcNAc...) asparagine; by host). Cystine bridges form between Cys125–Cys577, Cys142–Cys533, Cys215–Cys280, Cys372–Cys420, and Cys608–Cys645. The tract at residues 182-188 (SYAYIYT) is involved in fusion and/or binding to host membrane. N-linked (GlcNAc...) asparagine; by host glycosylation occurs at Asn238. The interval 267–274 (GSTWLYKE) is involved in fusion and/or binding to host membrane. N-linked (GlcNAc...) asparagine; by host glycans are attached at residues Asn369, Asn409, Asn414, Asn426, Asn481, Asn485, and Asn620. 2 hydrophobic membrane proximal region regions span residues 731–783 (ITSK…SFFT) and 762–782 (LVLG…VSFF). A helical transmembrane segment spans residues 786-806 (FGSLTLIILVVAVVVIVFLLY). The Intravirion segment spans residues 807 to 944 (QRQRSAVRQP…RDTGSDSELA (138 aa)). 2 disordered regions span residues 834-878 (TVTT…SATA) and 902-944 (REVP…SELA). Positions 931-934 (YRRL) match the Internalization motif motif.

Belongs to the herpesviridae glycoprotein B family. In terms of assembly, homotrimer; disulfide-linked. Binds to heparan sulfate proteoglycans. Interacts with gH/gL heterodimer. In terms of processing, a proteolytic cleavage by host furin generates two subunits that remain linked by disulfide bonds.

It localises to the virion membrane. The protein resides in the host cell membrane. The protein localises to the host endosome membrane. Its subcellular location is the host Golgi apparatus membrane. In terms of biological role, envelope glycoprotein that forms spikes at the surface of virion envelope. Essential for the initial attachment to heparan sulfate moieties of the host cell surface proteoglycans. Involved in fusion of viral and cellular membranes leading to virus entry into the host cell. Following initial binding to its host receptors, membrane fusion is mediated by the fusion machinery composed at least of gB and the heterodimer gH/gL. May be involved in the fusion between the virion envelope and the outer nuclear membrane during virion egress. The protein is Envelope glycoprotein B of Tupaiid herpesvirus (strain 2) (TuHV-2).